The primary structure comprises 150 residues: Large ribosomal subunit protein bL9 (150 aa).

The protein belongs to the bacterial ribosomal protein bL9 family.

Binds to the 23S rRNA. In Corynebacterium jeikeium (strain K411), this protein is Large ribosomal subunit protein bL9.